A 285-amino-acid chain; its full sequence is Complex I assembly factor TIMMDC1, mitochondrial (285 aa).

Transmembrane regions (helical) follow at residues 80–100, 137–159, 165–185, and 188–208; these read AALS…FIYA, RWSW…LTVY, LSHF…NLGL, and LVAG…LLMA.

The protein belongs to the Tim17/Tim22/Tim23 family. In terms of assembly, associates with the intermediate 315 kDa subcomplex of incompletely assembled complex I. Interacts with TMEM70.

Its subcellular location is the mitochondrion membrane. Its function is as follows. Chaperone protein involved in the assembly of the mitochondrial NADH:ubiquinone oxidoreductase complex (complex I). Participates in constructing the membrane arm of complex I. The chain is Complex I assembly factor TIMMDC1, mitochondrial from Rattus norvegicus (Rat).